A 194-amino-acid polypeptide reads, in one-letter code: Probable GTP-binding protein EngB (194 aa).

In terms of domain architecture, EngB-type G spans L22–P194. GTP contacts are provided by residues G30–S37, G57–L61, D75–G78, T142–D145, and F173–S175. Residues S37 and T59 each contribute to the Mg(2+) site.

This sequence belongs to the TRAFAC class TrmE-Era-EngA-EngB-Septin-like GTPase superfamily. EngB GTPase family. It depends on Mg(2+) as a cofactor.

Necessary for normal cell division and for the maintenance of normal septation. The protein is Probable GTP-binding protein EngB of Desulforapulum autotrophicum (strain ATCC 43914 / DSM 3382 / VKM B-1955 / HRM2) (Desulfobacterium autotrophicum).